The primary structure comprises 335 residues: DNA-directed RNA polymerase subunit alpha (335 aa).

An alpha N-terminal domain (alpha-NTD) region spans residues 1-248 (MTIQTSRTLS…GLFAPLQEVS (248 aa)). An alpha C-terminal domain (alpha-CTD) region spans residues 256-335 (KPDEDNQKNQ…LPRTREKGKA (80 aa)).

The protein belongs to the RNA polymerase alpha chain family. In cyanobacteria the RNAP catalytic core is composed of 2 alpha, 1 beta, 1 beta', 1 gamma and 1 omega subunit. When a sigma factor is associated with the core the holoenzyme is formed, which can initiate transcription.

The catalysed reaction is RNA(n) + a ribonucleoside 5'-triphosphate = RNA(n+1) + diphosphate. DNA-dependent RNA polymerase catalyzes the transcription of DNA into RNA using the four ribonucleoside triphosphates as substrates. This Synechococcus sp. (strain JA-2-3B'a(2-13)) (Cyanobacteria bacterium Yellowstone B-Prime) protein is DNA-directed RNA polymerase subunit alpha.